The following is a 308-amino-acid chain: Acetyl-coenzyme A carboxylase carboxyl transferase subunit beta (308 aa).

Residues 46-308 (LWVKCPDTGE…LMMGRGLKAA (263 aa)) enclose the CoA carboxyltransferase N-terminal domain.

It belongs to the AccD/PCCB family. As to quaternary structure, acetyl-CoA carboxylase is a heterohexamer composed of biotin carboxyl carrier protein (AccB), biotin carboxylase (AccC) and two subunits each of ACCase subunit alpha (AccA) and ACCase subunit beta (AccD).

It localises to the cytoplasm. The catalysed reaction is N(6)-carboxybiotinyl-L-lysyl-[protein] + acetyl-CoA = N(6)-biotinyl-L-lysyl-[protein] + malonyl-CoA. Its pathway is lipid metabolism; malonyl-CoA biosynthesis; malonyl-CoA from acetyl-CoA: step 1/1. In terms of biological role, component of the acetyl coenzyme A carboxylase (ACC) complex. Biotin carboxylase (BC) catalyzes the carboxylation of biotin on its carrier protein (BCCP) and then the CO(2) group is transferred by the transcarboxylase to acetyl-CoA to form malonyl-CoA. This Caulobacter sp. (strain K31) protein is Acetyl-coenzyme A carboxylase carboxyl transferase subunit beta.